The sequence spans 343 residues: MAQYKGAASEAGRAMQLMKKREKQREQLEQMKLKIAEENVVKANINKKFSAHYDAVEAELKSSTVGLVTLNDMKAKQEALVKEREKQLAKKEQFKDLQLKLEKQRERERKKEQKRKIASLSFNLEEDEECEDEESEEEEEEYVADKEDLPKKKKKKKQQLGKNPDVDTSFLPDRDREEEENRLREELRQEWERKQEKIKSEEIEITFSYWDGSGHRRTVKMKKGNSIQQFLQKALEILRKDFSELRSAGVEQLMYIKEDLIIPHHHSFYDFIVTKARGKSGPLFNFDVHEDVRLLSDASVEKDESHAGKVVLRSWYEKNKHIFPASRWEPYDPEKKWDKYTIR.

Disordered regions lie at residues 1–25 (MAQYKGAASEAGRAMQLMKKREKQR) and 125–181 (EEDE…EEEN). The segment covering 125–142 (EEDEECEDEESEEEEEEY) has biased composition (acidic residues). The segment covering 172–181 (PDRDREEEEN) has biased composition (basic and acidic residues).

This sequence belongs to the FAM50 family.

Its subcellular location is the nucleus. Its function is as follows. Probably involved in the regulation of pre-mRNA splicing. The chain is Protein FAM50A-B (fam50a-b) from Xenopus laevis (African clawed frog).